Reading from the N-terminus, the 716-residue chain is Segment polarity protein dishevelled homolog DVL-3 (716 aa).

Positions 1–82 constitute a DIX domain; the sequence is MGETKIIYHL…RVVSWLVSAE (82 aa). Omega-N-methylarginine is present on Arg-27. Phosphoserine occurs at positions 48 and 125. The tract at residues 85–235 is disordered; the sequence is HPEPAPFCAD…VSRIERSSSF (151 aa). The span at 142–156 shows a compositional bias: basic and acidic residues; that stretch reads QRERPRRRDGPEHAA. Positions 175 to 190 are enriched in low complexity; sequence SSSTLMSSELETTSFF. Ser-192 carries the post-translational modification Phosphoserine. The segment covering 199–212 has biased composition (low complexity); that stretch reads SRFSSSTEQSSASR. Arg-212 carries the post-translational modification Omega-N-methylarginine. The span at 213 to 226 shows a compositional bias: basic residues; that stretch reads LMRRHKRRRRKQKV. Positions 249 to 321 constitute a PDZ domain; it reads TVTLNMEKYN…NDDAVRVLRE (73 aa). Residue Arg-271 is modified to Asymmetric dimethylarginine; by PRMT1; alternate. Symmetric dimethylarginine; by PRMT7; alternate occurs at positions 271 and 342. Residue Arg-342 is modified to Omega-N-methylarginine; alternate. Thr-346 bears the Phosphothreonine mark. A DEP domain is found at 422-496; that stretch reads PESGLEVRDR…SEQCYYIFGD (75 aa). Positions 546–691 are disordered; that stretch reads PYNPHPGFPE…PPGRDLASVP (146 aa). Residues 565–581 are compositionally biased toward low complexity; it reads ASSQHSEGSRSSGSNRS. 2 stretches are compositionally biased toward basic and acidic residues: residues 582–595 and 604–622; these read GSDRRKEKDPKAGD and ESDHTTRSSLRGPRERAPS. Arg-614 is modified (symmetric dimethylarginine; by PRMT7). 2 stretches are compositionally biased toward pro residues: residues 653–663 and 670–682; these read YGPPGVPPLYG and TPPPAAMGPPGAP. Ser-697 bears the Phosphoserine mark. At Arg-698 the chain carries Omega-N-methylarginine; alternate. Arg-698 carries the post-translational modification Dimethylated arginine; alternate. Ser-700 carries the post-translational modification Phosphoserine.

This sequence belongs to the DSH family. As to quaternary structure, interacts (via the PDZ domain) with the C-terminal regions of VANGL1 and VANGL2. Interacts (via the region containing both the PDZ and DEP domains) with LRRFIP2; the DIX domain may inhibit this interaction. Interacts with CYLD. Interacts with CEP164 and DAB2. Interacts with DCDC2. Interacts with FOXK1 and FOXK2. Interacts with DAAM2. In terms of processing, ubiquitinated. Deubiquitinated by CYLD, which acts on 'Lys-63'-linked ubiquitin chains. Post-translationally, phosphorylated by CSNK1D. Arginine methylation may function as a switch in regulation of function in Wnt signaling. As to expression, ubiquitous.

It localises to the cytoplasm. Functionally, involved in the signal transduction pathway mediated by multiple Wnt genes. The sequence is that of Segment polarity protein dishevelled homolog DVL-3 (Dvl3) from Mus musculus (Mouse).